Reading from the N-terminus, the 276-residue chain is Carboxysome assembly protein CcmO (276 aa).

2 consecutive BMC domains span residues 16-100 and 120-204; these read ALGV…AVLP and AIGL…DSLP. Disordered stretches follow at residues 200–219 and 252–276; these read MDSL…LQLP and QSAL…RDDQ.

The protein belongs to the bacterial microcompartments protein family. In terms of assembly, homooligomerizes, possibly as a trimer, interacts with CcmK2 in the carboxysome.

The protein resides in the carboxysome. Required for formation of the carboxysome, a polyhedral inclusion where RuBisCO (ribulose bisphosphate carboxylase, rbcL-rbcS) is sequestered. Required for recruitment of major shell protein CcmK2 to the pre-carboxysome. Suggested to be a carboxysome shell protein, but it is not detected in gels, mass spectrometry or by protein sequencing. In terms of biological role, beta-carboxysome assembly initiates when soluble RuBisCO is condensed into a liquid matrix in a pre-carboxysome by the RbcS-like domains of probably both CcmM58 and CcmM35. CcmN interacts with the N-terminus of CcmM58, and then recruits the CcmK2 major shell protein via CcmN's encapsulation peptide. Shell formation requires CcmK proteins and CcmO. CcmL caps the otherwise elongated carboxysome. Once fully encapsulated carboxysomes are formed, they migrate within the cell probably via interactions with the cytoskeleton. The protein is Carboxysome assembly protein CcmO of Synechococcus elongatus (strain ATCC 33912 / PCC 7942 / FACHB-805) (Anacystis nidulans R2).